The sequence spans 379 residues: Homoserine O-succinyltransferase (379 aa).

One can recognise an AB hydrolase-1 domain in the interval 51–360; sequence NAVLICHALS…DSPYGHDAFL (310 aa). S157 acts as the Nucleophile in catalysis. R227 serves as a coordination point for substrate. Catalysis depends on residues D323 and H356. Residue D357 participates in substrate binding.

This sequence belongs to the AB hydrolase superfamily. MetX family. As to quaternary structure, homodimer.

It localises to the cytoplasm. The catalysed reaction is L-homoserine + succinyl-CoA = O-succinyl-L-homoserine + CoA. It functions in the pathway amino-acid biosynthesis; L-methionine biosynthesis via de novo pathway; O-succinyl-L-homoserine from L-homoserine: step 1/1. Requires MetW for activity. Functionally, transfers a succinyl group from succinyl-CoA to L-homoserine, forming succinyl-L-homoserine. This chain is Homoserine O-succinyltransferase, found in Pseudomonas putida (strain ATCC 47054 / DSM 6125 / CFBP 8728 / NCIMB 11950 / KT2440).